The sequence spans 159 residues: Transcription elongation factor GreA (159 aa).

Positions 47-73 form a coiled coil; it reads AEYDAAREEQSLTEAHIADLENKLSTA.

This sequence belongs to the GreA/GreB family.

Necessary for efficient RNA polymerase transcription elongation past template-encoded arresting sites. The arresting sites in DNA have the property of trapping a certain fraction of elongating RNA polymerases that pass through, resulting in locked ternary complexes. Cleavage of the nascent transcript by cleavage factors such as GreA or GreB allows the resumption of elongation from the new 3'terminus. GreA releases sequences of 2 to 3 nucleotides. The sequence is that of Transcription elongation factor GreA from Chlorobium phaeobacteroides (strain DSM 266 / SMG 266 / 2430).